The chain runs to 91 residues: Putative membrane protein insertion efficiency factor (91 aa).

The segment at glycine 66 to alanine 91 is disordered. Residues histidine 77 to alanine 91 show a composition bias toward basic and acidic residues.

The protein belongs to the UPF0161 family.

The protein localises to the cell inner membrane. Functionally, could be involved in insertion of integral membrane proteins into the membrane. The sequence is that of Putative membrane protein insertion efficiency factor from Hydrogenovibrio crunogenus (strain DSM 25203 / XCL-2) (Thiomicrospira crunogena).